Here is a 417-residue protein sequence, read N- to C-terminus: Cell division protein FtsA (417 aa).

It belongs to the FtsA/MreB family. In terms of assembly, self-interacts. Interacts with FtsZ.

The protein localises to the cell inner membrane. Its function is as follows. Cell division protein that is involved in the assembly of the Z ring. May serve as a membrane anchor for the Z ring. The protein is Cell division protein FtsA of Pseudomonas aeruginosa (strain ATCC 15692 / DSM 22644 / CIP 104116 / JCM 14847 / LMG 12228 / 1C / PRS 101 / PAO1).